The primary structure comprises 329 residues: Protein-arginine N-acetylglucosaminyltransferase NleB1 (329 aa).

A glycan (N-beta-linked (GlcNAc) arginine; by autocatalysis) is linked at R13. 48–50 (QWF) is a binding site for UDP-N-acetyl-alpha-D-glucosamine. R53 is a glycosylation site (N-beta-linked (GlcNAc) arginine; by autocatalysis). Y72 provides a ligand contact to UDP-N-acetyl-alpha-D-glucosamine. R159 carries N-beta-linked (GlcNAc) arginine; by autocatalysis glycosylation. 219-222 (YLDA) contributes to the UDP-N-acetyl-alpha-D-glucosamine binding site. The DXD motif motif lies at 221–223 (DAD). Mn(2+) is bound at residue D223. Residue E253 is the Proton acceptor of the active site. R293 carries N-beta-linked (GlcNAc) arginine; by autocatalysis glycosylation. Residues N320 and S322 each coordinate Mn(2+). UDP-N-acetyl-alpha-D-glucosamine is bound by residues S322 and 327–329 (SSW).

The protein belongs to the glycosyltransferase NleB family. It depends on Mn(2+) as a cofactor. Post-translationally, auto-glycosylated: arginine GlcNAcylation is required for activity toward death domain-containing host target proteins.

The protein resides in the secreted. The protein localises to the host cytoplasm. The catalysed reaction is L-arginyl-[protein] + UDP-N-acetyl-alpha-D-glucosamine = N(omega)-(N-acetyl-beta-D-glucosaminyl)-L-arginyl-[protein] + UDP + H(+). Protein-arginine N-acetylglucosaminyltransferase activity is inhibited by 100066N compound (flavone analog) and 102644N compound (a substituted isoxazole). In terms of biological role, protein-arginine N-acetylglucosaminyltransferase effector that disrupts TNF signaling in infected cells, including NF-kappa-B signaling, apoptosis and necroptosis. Acts by catalyzing the transfer of a single N-acetylglucosamine (GlcNAc) to a conserved arginine residue in the death domain of host proteins such as FADD: arginine GlcNAcylation prevents homotypic/heterotypic death domain interactions and assembly of the oligomeric TNF-alpha receptor complex, thereby disrupting TNF signaling. Also acts on host proteins without a death domain: catalyzes arginine GlcNAcylation of host GAPDH protein, thereby preventing GAPDH interaction with TRAF2, leading to inhibit NF-kappa-B signaling. Catalyzes auto-GlcNAcylation, which is required for activity toward death domain-containing host target proteins. The protein is Protein-arginine N-acetylglucosaminyltransferase NleB1 of Escherichia coli O157:H7.